Consider the following 131-residue polypeptide: Protein ApaG (131 aa).

Residues 3-127 (RAVTRQIEVT…FSLDSPDGGK (125 aa)) form the ApaG domain.

The protein is Protein ApaG of Bradyrhizobium sp. (strain BTAi1 / ATCC BAA-1182).